Reading from the N-terminus, the 402-residue chain is MDSDDESEAVHSVFNTVSQEGGKIFEQREILQIDYVPSENRIVGRDEQIEKVAGEIGPIVVGQPPNSIIIYGKTGCGKSLVAKHVSKIAREEAENRGVKLATGYVNCQQAKGNSDALSKYGRAINPPESGVKFPTRGISENEYFERVWSVLNEFYDAAIIVLDEVDKLNNDDLLMALSRAGEDGSVDVPIGVIAVSNKINYRDKMSERTKSSFGHNEFIFEPYDADQIREILQNRTDAFADGVLDDGVIPRAAALSAKEHGDARKAMRLLRYAGDQANKENAERVKESHLTDARASAEVDRLLELISGLPPHSKHVLLALANLTKNHPDREWFRTVRVREIYLEVCDRSGADPLSAERTRQLLNELCFLEVAGSRRGTGEGKGHYSQYTLLWDADIVLTLGN.

ATP-binding residues include tyrosine 223 and arginine 235.

This sequence belongs to the CDC6/cdc18 family.

Involved in regulation of DNA replication. The chain is ORC1-type DNA replication protein 17 (cdc6q) from Haloarcula marismortui (strain ATCC 43049 / DSM 3752 / JCM 8966 / VKM B-1809) (Halobacterium marismortui).